The primary structure comprises 246 residues: Phosphomannomutase 2 (246 aa).

Residue alanine 2 is modified to N-acetylalanine. Catalysis depends on aspartate 12, which acts as the Nucleophile. Aspartate 12 and aspartate 14 together coordinate Mg(2+). The active-site Proton donor/acceptor is the aspartate 14. Arginine 21, arginine 123, arginine 134, arginine 141, serine 179, and aspartate 181 together coordinate alpha-D-mannose 1-phosphate. Mg(2+)-binding residues include aspartate 209, phenylalanine 221, aspartate 223, and threonine 226.

It belongs to the eukaryotic PMM family. In terms of assembly, homodimer.

It localises to the cytoplasm. It carries out the reaction alpha-D-mannose 1-phosphate = D-mannose 6-phosphate. It functions in the pathway nucleotide-sugar biosynthesis; GDP-alpha-D-mannose biosynthesis; alpha-D-mannose 1-phosphate from D-fructose 6-phosphate: step 2/2. Functionally, involved in the synthesis of the GDP-mannose and dolichol-phosphate-mannose required for a number of critical mannosyl transfer reactions. The polypeptide is Phosphomannomutase 2 (PMM2) (Bos taurus (Bovine)).